The sequence spans 1288 residues: Peroxidasin homolog (1288 aa).

An N-terminal signal peptide occupies residues 1-16 (MNLLLYLLLLVPWVLG). The LRRNT domain maps to 17–51 (SEDGCPAKCTCDKKGFTVDCSNAGLTRIPKGISSN). 7 LRR repeats span residues 27–49 (CDKKGFTVDCSNAGLTRIPKGIS), 50–72 (SNVRSLVLRNNRIHTLIKSDLEG), 73–96 (FPLLESLVLTHNKIKVVEENILDH), 97–120 (LPELKRLSLSHNLLVYIPPLASES), 122–143 (PLASLNLKRNHIQFIDERWLLQ), 145–168 (FPELVQIDLSHNRIQSLRTKLFEN), and 204–227 (AYCTNPVELRHQAIDEVEESLLKC). The LRRCT domain occupies 180–228 (NPWNCDCRVTKVKALLRKVEWERKAYCTNPVELRHQAIDEVEESLLKCA). An N-linked (GlcNAc...) asparagine glycan is attached at Asn247. Residues 304 to 323 (LRQSHHSNGAPQFTYKPRDN) are disordered. 2 Ig-like C2-type domains span residues 314-400 (PQFT…FSLD) and 407-494 (PNIY…AKLT). Cys335 and Cys384 are disulfide-bonded. 2 LRR repeats span residues 356 to 381 (SSRKKQLGLSNNVLRIYPFLEEDSGR) and 387 to 412 (VNSLGKVSHTFSLDLISSIPPNIYEG). An intrachain disulfide couples Cys428 to Cys478. Asn594 is a glycosylation site (N-linked (GlcNAc...) asparagine). Cys624 and Cys640 form a disulfide bridge. Position 718 (Asp718) interacts with heme b. Catalysis depends on His719, which acts as the Proton acceptor. Residue Asp720 coordinates Ca(2+). 2 cysteine pairs are disulfide-bonded: Cys739/Cys749 and Cys743/Cys770. A glycan (N-linked (GlcNAc...) asparagine) is linked at Asn740. Ca(2+)-binding residues include Thr802, Phe804, Asp806, and Ser808. An N-linked (GlcNAc...) asparagine glycan is attached at Asn857. Heme b is bound by residues Glu876 and His972. 2 LRR repeats span residues 998–1022 (KAFFTPELVLTEGGIDPLLRGLFAS) and 1049–1073 (SLDLAVMNIQRSRDHGLPSYTEYRQ). 2 disulfides stabilise this stretch: Cys1075–Cys1132 and Cys1173–Cys1200. The LRR 12 repeat unit spans residues 1168–1189 (LARLLCDNGDEIDRIQKDVFMY).

It belongs to the peroxidase family. XPO subfamily. Ca(2+) serves as cofactor. Requires heme b as cofactor.

It is found in the secreted. Its subcellular location is the extracellular space. The protein localises to the extracellular matrix. It catalyses the reaction L-lysyl-[collagen] + L-methionyl-[collagen] + H2O2 = [collagen]-L-lysyl-N-S-L-methionyl-[collagen] + 2 H2O + H(+). The enzyme catalyses bromide + H2O2 = hypobromite + H2O. The catalysed reaction is L-lysyl-[collagen] + L-methionyl-[collagen] + hypobromite = [collagen]-L-lysyl-N-S-L-methionyl-[collagen] + bromide + H2O + H(+). It carries out the reaction L-tyrosyl-[protein] + bromide + H2O2 + H(+) = 3-bromo-L-tyrosyl-[protein] + 2 H2O. It catalyses the reaction hypobromite + L-tyrosyl-[protein] + H(+) = 3-bromo-L-tyrosyl-[protein] + H2O. Functionally, catalyzes the two-electron oxidation of bromide by hydrogen peroxide and generates hypobromite as a reactive intermediate which mediates the formation of sulfilimine cross-links between methionine and hydroxylysine residues within an uncross-linked collagen IV NC1 hexamer. Plays a role in the attachment of tissues and in axonal guidance during early developmental stages. May functionally antagonize the peroxidasin pxn-2 to maintain neuronal development. The polypeptide is Peroxidasin homolog (Caenorhabditis briggsae).